A 194-amino-acid chain; its full sequence is Fe/S biogenesis protein NfuA (194 aa).

2 residues coordinate [4Fe-4S] cluster: C152 and C155.

Belongs to the NfuA family. Homodimer. The cofactor is [4Fe-4S] cluster.

Involved in iron-sulfur cluster biogenesis. Binds a 4Fe-4S cluster, can transfer this cluster to apoproteins, and thereby intervenes in the maturation of Fe/S proteins. Could also act as a scaffold/chaperone for damaged Fe/S proteins. In Pseudomonas fluorescens (strain SBW25), this protein is Fe/S biogenesis protein NfuA.